The following is a 355-amino-acid chain: Transcription factor TGAL9 (355 aa).

Disordered stretches follow at residues 83 to 104 (FPSQ…MAAI) and 118 to 188 (GSSK…DAKT). The segment covering 118-134 (GSSKRPPAAAAAGGQPS) has biased composition (low complexity). Polar residues predominate over residues 135 to 144 (RLNNPADQPS). 2 stretches are compositionally biased toward basic and acidic residues: residues 148-159 (KDGKAAVVKKEG) and 176-188 (SEHE…DAKT). The 46-residue stretch at 185–230 (DAKTLRRLAQNREAARKSRLRKKAYIQNLETSRIRLSQLEQELVQR) folds into the bZIP domain. The segment at 187-207 (KTLRRLAQNREAARKSRLRKK) is basic motif. Residues 213–227 (LETSRIRLSQLEQEL) form a leucine-zipper region. In terms of domain architecture, DOG1 spans 254 to 355 (AAWFDGEYAR…RPSELIKVST (102 aa)).

It belongs to the bZIP family. As to quaternary structure, interacts with NPR5/NH4, NH5.1 and NH5.2.

The protein resides in the nucleus. Functionally, transcriptional regulator involved in defense response. The chain is Transcription factor TGAL9 from Oryza sativa subsp. japonica (Rice).